Here is a 783-residue protein sequence, read N- to C-terminus: Zinc finger protein 107 (783 aa).

A C2H2-type 1; atypical zinc finger spans residues 76–98; it reads FQCNKYVKVFDKFSNSNRYKRRH. 3 C2H2-type zinc fingers span residues 104-126, 132-154, and 160-182; these read FKCKECSKSFCVLSQLTQHRRIH, YKCEECGKAFNWFSTLTKHKRIH, and YKCEECGKAFNQSSQLTRHKIIH. A Glycyl lysine isopeptide (Lys-Gly) (interchain with G-Cter in SUMO2) cross-link involves residue K186. The segment at 188–210 adopts a C2H2-type 5 zinc-finger fold; the sequence is NKCEECGKAFKQASHLTIHKIIH. The C2H2-type 6; atypical zinc-finger motif lies at 216-238; that stretch reads YKYEECGKVFSQSSHLTTQKILH. The segment at 244–266 adopts a C2H2-type 7 zinc-finger fold; it reads YKCKECGKAFNLFSNLTNHKRIH. Residues 272–294 form a C2H2-type 8; atypical zinc finger; that stretch reads YKCKECGRAFNISSNLNKQEKIH. The segment at 300–322 adopts a C2H2-type 9; atypical zinc-finger fold; that stretch reads NKCEECDKAFNRSLKLTAHKKIL. 2 C2H2-type zinc fingers span residues 328-350 and 356-378; these read YKCEECGKVFNQFSTLTRHKIIH and YKCKECGKAFNQSSNLTEHKKIH. The C2H2-type 12; atypical zinc finger occupies 384–406; the sequence is YKCEECGKAFNQHSNLINHRKIY. C2H2-type zinc fingers lie at residues 412 to 434, 440 to 462, 468 to 490, and 496 to 518; these read YKCEECGKAFNRSSTLTRHKKIH, YKCEECDRAFSQSSNLTEHKKIH, YKCEECGKAFNRFSTLTKHKRIH, and YKCEECGKAFNQSYQLTRHKIVH. The C2H2-type 17; atypical zinc finger occupies 524–546; that stretch reads NKCEEFGKAFKQSSHRTIHKIIH. The C2H2-type 18; atypical zinc-finger motif lies at 552 to 574; sequence YKCEEHGKVFNQSSNLTTQKIIH. The C2H2-type 19; atypical zinc finger occupies 580–602; the sequence is YKFEEHGKAFNLFSNITNHKIIY. 5 C2H2-type zinc fingers span residues 608-630, 636-658, 664-686, 692-714, and 720-742; these read HKCEECGKAYNRFSNLTIHKRIH, YQCAECGKAFNCSSTLNRHKIIH, YKCKECGKAFNLSSTLTAHKKIH, YKCEECGKAFNQSSNLTTHKKIH, and YKCEECGKSFNQFSSLNIHKIIH. The C2H2-type 25; atypical zinc finger occupies 748 to 770; it reads YKCGDYGRAFNLSSNLTTHKKIH.

Belongs to the krueppel C2H2-type zinc-finger protein family. Expressed in brain, heart, skeletal muscle, kidney and pancreas. Weakly expressed in aorta, liver and lung.

The protein resides in the nucleus. In terms of biological role, may be involved in transcriptional regulation. In Homo sapiens (Human), this protein is Zinc finger protein 107 (ZNF107).